The sequence spans 124 residues: MVAWLWKVLVGVGLSALAHAAFSAAQHRSHTRLAEMKYEPLPTDIVLQTLLAFALTCYGVVHTAGDFRDRDATSELKNVTFDTLRNRPSFYVFQHSGSSLLQPSDTTRSSNLNVPSSDDIRLKF.

Position 1 (Met-1) is a topological domain, cytoplasmic. The helical transmembrane segment at 2-22 (VAWLWKVLVGVGLSALAHAAF) threads the bilayer. Residues 23–44 (SAAQHRSHTRLAEMKYEPLPTD) are Lumenal-facing. A helical membrane pass occupies residues 45–65 (IVLQTLLAFALTCYGVVHTAG). The Cytoplasmic portion of the chain corresponds to 66–124 (DFRDRDATSELKNVTFDTLRNRPSFYVFQHSGSSLLQPSDTTRSSNLNVPSSDDIRLKF).

Belongs to the membrane magnesium transporter (TC 1.A.67) family.

The protein resides in the golgi apparatus membrane. The protein localises to the early endosome membrane. Mediates Mg(2+) transport. The protein is Membrane magnesium transporter 2 of Rattus norvegicus (Rat).